We begin with the raw amino-acid sequence, 312 residues long: Ribonuclease Z (312 aa).

Residues His63, His65, Asp67, His68, His140, Asp211, and His269 each contribute to the Zn(2+) site. Asp67 functions as the Proton acceptor in the catalytic mechanism.

This sequence belongs to the RNase Z family. Homodimer. Zn(2+) is required as a cofactor.

It catalyses the reaction Endonucleolytic cleavage of RNA, removing extra 3' nucleotides from tRNA precursor, generating 3' termini of tRNAs. A 3'-hydroxy group is left at the tRNA terminus and a 5'-phosphoryl group is left at the trailer molecule.. Its function is as follows. Zinc phosphodiesterase, which displays some tRNA 3'-processing endonuclease activity. Probably involved in tRNA maturation, by removing a 3'-trailer from precursor tRNA. This chain is Ribonuclease Z, found in Shouchella clausii (strain KSM-K16) (Alkalihalobacillus clausii).